Reading from the N-terminus, the 365-residue chain is MPLGKLDLVEEEYIAESGDHTPEASRLMGNGDSVVENLNGHTNGAVAKKKNEPRVPDMQLGKCRYVRLHDNVNYVAAAIILRNQGDDTEVLLIQEAKKSCRGKWYMPAGRVEAGETIEEAVVREVKEETGYSCDVVELLSLQVQGSGWYRYAFYCNITGGDLKTEPDQESLAAEWYNIKDLKANKVQLRGRDFIRLVDEAVTYRTHGPVDSIPRVMPLNQNVAGLFLEFMIVKHSRDGLRTEVLVHKSIKDETYLLEEEQPFPTVEFGFEYFFAMVVSKCYRHLLEEGANVVFTPSHVTRIKCHPKPMESLAHGVSIRVYCEHKQSASKAIIRSPRYHWISVESPETRQRFHMAQKQFRPSLHML.

The Nudix hydrolase domain occupies 72 to 201 (VNYVAAAIIL…DFIRLVDEAV (130 aa)). The Nudix box signature appears at 109–130 (GRVEAGETIEEAVVREVKEETG). Mg(2+) contacts are provided by E124 and E128.

It belongs to the Nudix hydrolase family. The cofactor is Mg(2+). Requires Mn(2+) as cofactor.

In terms of biological role, probably mediates the hydrolysis of some nucleoside diphosphate derivatives. The protein is Putative nudix hydrolase 1 (ndx-1) of Caenorhabditis elegans.